The chain runs to 184 residues: NADH-quinone oxidoreductase subunit B (184 aa).

4 residues coordinate [4Fe-4S] cluster: Cys37, Cys38, Cys103, and Cys132.

The protein belongs to the complex I 20 kDa subunit family. NDH-1 is composed of 14 different subunits. Subunits NuoB, C, D, E, F, and G constitute the peripheral sector of the complex. Requires [4Fe-4S] cluster as cofactor.

The protein resides in the cell membrane. It carries out the reaction a quinone + NADH + 5 H(+)(in) = a quinol + NAD(+) + 4 H(+)(out). In terms of biological role, NDH-1 shuttles electrons from NADH, via FMN and iron-sulfur (Fe-S) centers, to quinones in the respiratory chain. The immediate electron acceptor for the enzyme in this species is believed to be a menaquinone. Couples the redox reaction to proton translocation (for every two electrons transferred, four hydrogen ions are translocated across the cytoplasmic membrane), and thus conserves the redox energy in a proton gradient. This Mycolicibacterium paratuberculosis (strain ATCC BAA-968 / K-10) (Mycobacterium paratuberculosis) protein is NADH-quinone oxidoreductase subunit B.